The sequence spans 553 residues: HTH-type transcriptional regulator SgrR (553 aa).

The HTH marR-type domain occupies 1–117; that stretch reads MPSSRLQQQF…LSQIERRFRQ (117 aa). A DNA-binding region (H-T-H motif) is located at residues 26–49; it reads LQELANVLHCSKRHIRSLLNNMQK. Positions 163–494 are solute-binding; sequence EPEADLAHHW…NDLSKEVSQW (332 aa).

Its function is as follows. Activates the small RNA gene sgrS under glucose-phosphate stress conditions as well as yfdZ. Represses its own transcription under both stress and non-stress conditions. Might act as a sensor of the intracellular accumulation of phosphoglucose by binding these molecules in its C-terminal solute-binding domain. The chain is HTH-type transcriptional regulator SgrR from Photorhabdus laumondii subsp. laumondii (strain DSM 15139 / CIP 105565 / TT01) (Photorhabdus luminescens subsp. laumondii).